The chain runs to 113 residues: Histone H2B (113 aa).

The segment at 1–21 (MPATPAKRAKRVQQEKRHHKK) is disordered. Basic residues predominate over residues 7-21 (KRAKRVQQEKRHHKK). Residue Lys-109 forms a Glycyl lysine isopeptide (Lys-Gly) (interchain with G-Cter in ubiquitin) linkage.

Belongs to the histone H2B family. As to quaternary structure, the nucleosome is a histone octamer containing two molecules each of H2A, H2B, H3 and H4 assembled in one H3-H4 heterotetramer and two H2A-H2B heterodimers. The octamer wraps approximately 147 bp of DNA. Monoubiquitination of Lys-109 gives a specific tag for epigenetic transcriptional activation and is also prerequisite for histone H3 'Lys-4' and 'Lys-79' methylation.

The protein localises to the nucleus. The protein resides in the chromosome. In terms of biological role, core component of nucleosome. Nucleosomes wrap and compact DNA into chromatin, limiting DNA accessibility to the cellular machineries which require DNA as a template. Histones thereby play a central role in transcription regulation, DNA repair, DNA replication and chromosomal stability. DNA accessibility is regulated via a complex set of post-translational modifications of histones, also called histone code, and nucleosome remodeling. The chain is Histone H2B (H2B1) from Euplotes crassus.